The following is a 169-amino-acid chain: Ureidoglycolate lyase (169 aa).

It belongs to the ureidoglycolate lyase family. In terms of assembly, homodimer. Requires Ni(2+) as cofactor.

The enzyme catalyses (S)-ureidoglycolate = urea + glyoxylate. The protein operates within nitrogen metabolism; (S)-allantoin degradation. Catalyzes the catabolism of the allantoin degradation intermediate (S)-ureidoglycolate, generating urea and glyoxylate. Involved in the utilization of allantoin as nitrogen source. This Pseudomonas paraeruginosa (strain DSM 24068 / PA7) (Pseudomonas aeruginosa (strain PA7)) protein is Ureidoglycolate lyase.